A 223-amino-acid polypeptide reads, in one-letter code: Translation initiation factor 6 (223 aa).

This sequence belongs to the eIF-6 family. As to quaternary structure, associates with the 50S ribosomal subunit, specifically with protein L14. Binds to 23S rRNA, possibly between where the 30S and 50S subunits associate to initiate translation. Post-translationally, modified in an unknown fashion (not phosphorylation) following release from 50S ribosomal subunits.

Functionally, binds to the 50S ribosomal subunit and prevents its association with the 30S ribosomal subunit to form the 70S initiation complex. Inhibits translation of both leadered and leaderless mRNAs, maybe by binding to the 50S ribosome subunit, preventing it from binding to the 30S subunit. The chain is Translation initiation factor 6 from Saccharolobus solfataricus (strain ATCC 35092 / DSM 1617 / JCM 11322 / P2) (Sulfolobus solfataricus).